Here is a 353-residue protein sequence, read N- to C-terminus: MLARAARGTGALLLRGSVQASGRIPRRASSGLPRNTVILFVPQQEAWVVERMGRFHRILEPGLNVLIPVLDRIRYVQSLKEIVINVPEQSAVTLDNVTLQIDGVLYLRIMDPYKASYGVEDPEYAVTQLAQTTMRSELGKLSLDKVFRERESLNANIVDAINQAADCWGIRCLRYEIKDIHVPPRVKESMQMQVEAERRKRATVLESEGTRESAINVAEGKKQAQILASEAEKAEQINQAAGEASAVLAKAKAKAEAIRILAGALTQHNGDAAASLTVAEQYVSAFSKLAKDSNTVLLPSNPSDVTSMVAQAMGVYGALTKAPVPGAQNSSEARRDVQTTDTSIEELGRVKLS.

The transit peptide at 1 to 28 (MLARAARGTGALLLRGSVQASGRIPRRA) directs the protein to the mitochondrion. S17 carries the post-translational modification Phosphoserine; by PKC/PRKCZ. Residue Y124 is modified to Phosphotyrosine. Position 145 is an N6-acetyllysine; alternate (K145). At K145 the chain carries N6-succinyllysine; alternate. A coiled-coil region spans residues 215 to 252 (INVAEGKKQAQILASEAEKAEQINQAAGEASAVLAKAK). K233 carries the N6-acetyllysine modification. The disordered stretch occupies residues 324-353 (VPGAQNSSEARRDVQTTDTSIEELGRVKLS). S330 carries the post-translational modification Phosphoserine.

It belongs to the band 7/mec-2 family. Forms homooligomers. Interacts with MFN2; may form heterooligomers. Interacts with PHB1 and PHB2; recruits them to cardiolipin-enriched mitochondrial membranes and stabilizes them. Interacts with CACNA2D2.

Its subcellular location is the cell membrane. It localises to the mitochondrion. It is found in the mitochondrion inner membrane. The protein localises to the mitochondrion intermembrane space. The protein resides in the membrane raft. Its subcellular location is the cytoplasm. It localises to the cytoskeleton. Its function is as follows. Mitochondrial protein that probably regulates the biogenesis and the activity of mitochondria. Stimulates cardiolipin biosynthesis, binds cardiolipin-enriched membranes where it recruits and stabilizes some proteins including prohibitin and may therefore act in the organization of functional microdomains in mitochondrial membranes. Through regulation of the mitochondrial function may play a role into several biological processes including cell migration, cell proliferation, T-cell activation, calcium homeostasis and cellular response to stress. May play a role in calcium homeostasis through negative regulation of calcium efflux from mitochondria. Required for mitochondrial hyperfusion a pro-survival cellular response to stress which results in increased ATP production by mitochondria. May also regulate the organization of functional domains at the plasma membrane and play a role in T-cell activation through association with the T-cell receptor signaling complex and its regulation. This chain is Stomatin-like protein 2, mitochondrial (Stoml2), found in Rattus norvegicus (Rat).